The chain runs to 328 residues: Cell division protein ZipA (328 aa).

Residues 1 to 4 (MDLN) are Periplasmic-facing. Residues 5–25 (TILIIVGIVALVALIVHGLWS) form a helical membrane-spanning segment. Over 26–328 (NRREKSKYFD…NAEQAYLARV (303 aa)) the chain is Cytoplasmic. Residues 44-82 (SLTSRSHTQEEMVQPNNISPNTYVENGHTPISQPTTEKL) are disordered. Residues 57–81 (QPNNISPNTYVENGHTPISQPTTEK) show a composition bias toward polar residues.

The protein belongs to the ZipA family. As to quaternary structure, interacts with FtsZ via their C-terminal domains.

It is found in the cell inner membrane. Its function is as follows. Essential cell division protein that stabilizes the FtsZ protofilaments by cross-linking them and that serves as a cytoplasmic membrane anchor for the Z ring. Also required for the recruitment to the septal ring of downstream cell division proteins. The chain is Cell division protein ZipA from Haemophilus influenzae (strain PittGG).